The primary structure comprises 184 residues: Ribosome-recycling factor (184 aa).

Belongs to the RRF family.

It is found in the cytoplasm. In terms of biological role, responsible for the release of ribosomes from messenger RNA at the termination of protein biosynthesis. May increase the efficiency of translation by recycling ribosomes from one round of translation to another. The protein is Ribosome-recycling factor of Acinetobacter baumannii (strain AB307-0294).